Consider the following 520-residue polypeptide: Laccase (520 aa).

An N-terminal signal peptide occupies residues Met-1–Ala-21. 2 consecutive Plastocyanin-like domains span residues Ile-23 to Tyr-148 and Val-160 to Tyr-302. Residues Asn-72 and Asn-75 are each glycosylated (N-linked (GlcNAc...) asparagine). Cu cation is bound by residues His-85, His-87, His-130, and His-132. Cystine bridges form between Cys-106-Cys-509 and Cys-138-Cys-226. 3 N-linked (GlcNAc...) asparagine glycosylation sites follow: Asn-210, Asn-229, and Asn-354. In terms of domain architecture, Plastocyanin-like 3 spans Thr-369–Asp-491. Cu cation is bound by residues His-416, His-419, His-421, His-473, Cys-474, His-475, and His-479.

Belongs to the multicopper oxidase family. Requires Cu cation as cofactor.

It is found in the secreted. It catalyses the reaction 4 hydroquinone + O2 = 4 benzosemiquinone + 2 H2O. Functionally, lignin degradation and detoxification of lignin-derived products. Has activity towards guaiacol. The chain is Laccase from Trametes hirsuta (White-rot fungus).